A 331-amino-acid chain; its full sequence is Fructose-1,6-bisphosphatase class 1 2 (331 aa).

Positions 80, 98, 100, and 101 each coordinate Mg(2+). Substrate is bound by residues 101 to 104 (DGSS) and Asn189. Glu261 lines the Mg(2+) pocket.

This sequence belongs to the FBPase class 1 family. As to quaternary structure, homotetramer. Mg(2+) serves as cofactor.

It is found in the cytoplasm. It carries out the reaction beta-D-fructose 1,6-bisphosphate + H2O = beta-D-fructose 6-phosphate + phosphate. It participates in carbohydrate biosynthesis; Calvin cycle. The sequence is that of Fructose-1,6-bisphosphatase class 1 2 from Cereibacter sphaeroides (strain ATCC 17029 / ATH 2.4.9) (Rhodobacter sphaeroides).